We begin with the raw amino-acid sequence, 284 residues long: Bifunctional protein FolD (284 aa).

NADP(+) contacts are provided by residues 166–168 (GAS) and Ile-232.

Belongs to the tetrahydrofolate dehydrogenase/cyclohydrolase family. Homodimer.

The enzyme catalyses (6R)-5,10-methylene-5,6,7,8-tetrahydrofolate + NADP(+) = (6R)-5,10-methenyltetrahydrofolate + NADPH. The catalysed reaction is (6R)-5,10-methenyltetrahydrofolate + H2O = (6R)-10-formyltetrahydrofolate + H(+). The protein operates within one-carbon metabolism; tetrahydrofolate interconversion. Its function is as follows. Catalyzes the oxidation of 5,10-methylenetetrahydrofolate to 5,10-methenyltetrahydrofolate and then the hydrolysis of 5,10-methenyltetrahydrofolate to 10-formyltetrahydrofolate. The chain is Bifunctional protein FolD from Pseudomonas fluorescens (strain Pf0-1).